The sequence spans 133 residues: Ribonuclease VapC1 (133 aa).

Mg(2+)-binding residues include Asp7 and Asp98.

Belongs to the PINc/VapC protein family. Mg(2+) is required as a cofactor.

In terms of biological role, toxic component of a type II toxin-antitoxin (TA) system. The cognate antitoxin is VapB1. In Mycobacterium tuberculosis (strain CDC 1551 / Oshkosh), this protein is Ribonuclease VapC1.